The primary structure comprises 88 residues: ATP synthase subunit 9, mitochondrial (88 aa).

A run of 2 helical transmembrane segments spans residues 30 to 50 and 66 to 86; these read IGLT…ILAV and LGFA…FLIL.

It belongs to the ATPase C chain family. As to quaternary structure, F-type ATPases have 2 components, CF(1) - the catalytic core - and CF(0) - the membrane proton channel. CF(1) has five subunits: alpha(3), beta(3), gamma(1), delta(1), epsilon(1). CF(0) has three main subunits: a, b and c.

It is found in the mitochondrion membrane. Functionally, mitochondrial membrane ATP synthase (F(1)F(0) ATP synthase or Complex V) produces ATP from ADP in the presence of a proton gradient across the membrane which is generated by electron transport complexes of the respiratory chain. F-type ATPases consist of two structural domains, F(1) - containing the extramembraneous catalytic core and F(0) - containing the membrane proton channel, linked together by a central stalk and a peripheral stalk. During catalysis, ATP synthesis in the catalytic domain of F(1) is coupled via a rotary mechanism of the central stalk subunits to proton translocation. Part of the complex F(0) domain. A homomeric c-ring of probably 10 subunits is part of the complex rotary element. The chain is ATP synthase subunit 9, mitochondrial (atp9) from Dictyostelium citrinum (Slime mold).